Reading from the N-terminus, the 130-residue chain is Small ribosomal subunit protein uS8 (130 aa).

It belongs to the universal ribosomal protein uS8 family.

The chain is Small ribosomal subunit protein uS8 (RPS22) from Kluyveromyces marxianus (Yeast).